Reading from the N-terminus, the 135-residue chain is Mediator of RNA polymerase II transcription subunit 10 (135 aa).

The protein belongs to the Mediator complex subunit 10 family. In terms of assembly, component of the Mediator complex.

The protein resides in the nucleus. Its function is as follows. Component of the Mediator complex, a coactivator involved in the regulated transcription of nearly all RNA polymerase II-dependent genes. Mediator functions as a bridge to convey information from gene-specific regulatory proteins to the basal RNA polymerase II transcription machinery. Mediator is recruited to promoters by direct interactions with regulatory proteins and serves as a scaffold for the assembly of a functional preinitiation complex with RNA polymerase II and the general transcription factors. This is Mediator of RNA polymerase II transcription subunit 10 (med10) from Xenopus tropicalis (Western clawed frog).